We begin with the raw amino-acid sequence, 296 residues long: Probable endonuclease 4 (296 aa).

Zn(2+)-binding residues include His-68, His-109, Glu-144, Asp-178, His-181, His-213, Asp-226, His-228, and Glu-258.

The protein belongs to the AP endonuclease 2 family. Requires Zn(2+) as cofactor.

It catalyses the reaction Endonucleolytic cleavage to 5'-phosphooligonucleotide end-products.. Endonuclease IV plays a role in DNA repair. It cleaves phosphodiester bonds at apurinic or apyrimidinic (AP) sites, generating a 3'-hydroxyl group and a 5'-terminal sugar phosphate. This chain is Probable endonuclease 4, found in Staphylococcus carnosus (strain TM300).